A 335-amino-acid chain; its full sequence is Fructose-1,6-bisphosphatase class 1 (335 aa).

The Mg(2+) site is built by Glu92, Asp114, Leu116, and Asp117. Substrate is bound by residues 117–120 and Asn209; that span reads DGSS. A Mg(2+)-binding site is contributed by Glu281.

Belongs to the FBPase class 1 family. Homotetramer. Mg(2+) serves as cofactor.

Its subcellular location is the cytoplasm. It carries out the reaction beta-D-fructose 1,6-bisphosphate + H2O = beta-D-fructose 6-phosphate + phosphate. Its pathway is carbohydrate biosynthesis; gluconeogenesis. This chain is Fructose-1,6-bisphosphatase class 1, found in Nitrosococcus oceani (strain ATCC 19707 / BCRC 17464 / JCM 30415 / NCIMB 11848 / C-107).